The sequence spans 407 residues: uncharacterized protein (407 aa).

This is an uncharacterized protein from Saimiriine herpesvirus 2 (strain 11) (SaHV-2).